Here is a 429-residue protein sequence, read N- to C-terminus: Adenylosuccinate synthetase (429 aa).

Residues 15-21 and 43-45 each bind GTP; these read GDEGKGK and GHV. The active-site Proton acceptor is D16. D16 and G43 together coordinate Mg(2+). Residues 16 to 19, 41 to 44, T131, R145, Q225, T240, and R304 each bind IMP; these read DEGK and NAGH. H44 acts as the Proton donor in catalysis. Position 300–306 (300–306) interacts with substrate; the sequence is SNTKRPR. GTP-binding positions include R306, 332–334, and 414–416; these read LLD and SVG.

The protein belongs to the adenylosuccinate synthetase family. Homodimer. The cofactor is Mg(2+).

It localises to the cytoplasm. The enzyme catalyses IMP + L-aspartate + GTP = N(6)-(1,2-dicarboxyethyl)-AMP + GDP + phosphate + 2 H(+). It participates in purine metabolism; AMP biosynthesis via de novo pathway; AMP from IMP: step 1/2. Plays an important role in the de novo pathway of purine nucleotide biosynthesis. Catalyzes the first committed step in the biosynthesis of AMP from IMP. This Mesoplasma florum (strain ATCC 33453 / NBRC 100688 / NCTC 11704 / L1) (Acholeplasma florum) protein is Adenylosuccinate synthetase.